Consider the following 194-residue polypeptide: A-type ATP synthase subunit E (194 aa).

It belongs to the V-ATPase E subunit family. Has multiple subunits with at least A(3), B(3), C, D, E, F, H, I and proteolipid K(x).

Its subcellular location is the cell membrane. Functionally, component of the A-type ATP synthase that produces ATP from ADP in the presence of a proton gradient across the membrane. This Saccharolobus islandicus (strain M.16.27) (Sulfolobus islandicus) protein is A-type ATP synthase subunit E.